Reading from the N-terminus, the 313-residue chain is Carbamate kinase (313 aa).

Belongs to the carbamate kinase family.

Its subcellular location is the cytoplasm. The enzyme catalyses hydrogencarbonate + NH4(+) + ATP = carbamoyl phosphate + ADP + H2O + H(+). It participates in metabolic intermediate metabolism; carbamoyl phosphate degradation; CO(2) and NH(3) from carbamoyl phosphate: step 1/1. The chain is Carbamate kinase (arcC) from Oenococcus oeni (Leuconostoc oenos).